An 85-amino-acid chain; its full sequence is Putative sodium channel toxin Ts37 (85 aa).

The first 20 residues, 1–20, serve as a signal peptide directing secretion; sequence MAGEWACLLVSLVLLWGAAG. An LCN-type CS-alpha/beta domain is found at 22–83; it reads RDGFLLDRNF…KIWGDSVRCR (62 aa). 4 cysteine pairs are disulfide-bonded: Cys-32–Cys-82, Cys-36–Cys-59, Cys-45–Cys-64, and Cys-49–Cys-66.

Belongs to the long (4 C-C) scorpion toxin superfamily. Sodium channel inhibitor family. As to expression, expressed by the venom gland.

It is found in the secreted. In terms of biological role, putative sodium channel toxin. This chain is Putative sodium channel toxin Ts37, found in Tityus serrulatus (Brazilian scorpion).